Reading from the N-terminus, the 458-residue chain is N-acetylgalactosamine kinase (458 aa).

4 residues coordinate alpha-D-galactose: arginine 43, glutamate 49, histidine 50, and aspartate 52. ATP is bound by residues glycine 143, serine 145, and serine 146. Aspartate 190 is a binding site for alpha-D-galactose. Catalysis depends on aspartate 190, which acts as the Proton acceptor. ATP contacts are provided by asparagine 233 and lysine 234.

This sequence belongs to the GHMP kinase family. GalK subfamily. In terms of assembly, monomer.

It carries out the reaction N-acetyl-alpha-D-galactosamine + ATP = N-acetyl-alpha-D-galactosamine 1-phosphate + ADP + H(+). Its function is as follows. Acts on GalNAc. Also acts as a galactokinase when galactose is present at high concentrations. The polypeptide is N-acetylgalactosamine kinase (GALK2) (Pongo abelii (Sumatran orangutan)).